A 121-amino-acid chain; its full sequence is Phosphoribosyl-AMP cyclohydrolase (121 aa).

Asp76 is a binding site for Mg(2+). Position 77 (Cys77) interacts with Zn(2+). Mg(2+) is bound by residues Asp78 and Asp80. Residues Cys93 and Cys100 each coordinate Zn(2+).

It belongs to the PRA-CH family. As to quaternary structure, homodimer. The cofactor is Mg(2+). Requires Zn(2+) as cofactor.

It localises to the cytoplasm. The enzyme catalyses 1-(5-phospho-beta-D-ribosyl)-5'-AMP + H2O = 1-(5-phospho-beta-D-ribosyl)-5-[(5-phospho-beta-D-ribosylamino)methylideneamino]imidazole-4-carboxamide. The protein operates within amino-acid biosynthesis; L-histidine biosynthesis; L-histidine from 5-phospho-alpha-D-ribose 1-diphosphate: step 3/9. In terms of biological role, catalyzes the hydrolysis of the adenine ring of phosphoribosyl-AMP. The protein is Phosphoribosyl-AMP cyclohydrolase of Paracoccus denitrificans (strain Pd 1222).